A 225-amino-acid chain; its full sequence is ATP-dependent Clp protease proteolytic subunit (225 aa).

Ser-101 functions as the Nucleophile in the catalytic mechanism. His-126 is an active-site residue.

It belongs to the peptidase S14 family. As to quaternary structure, component of the chloroplastic Clp protease core complex.

Its subcellular location is the plastid. The protein localises to the chloroplast stroma. It catalyses the reaction Hydrolysis of proteins to small peptides in the presence of ATP and magnesium. alpha-casein is the usual test substrate. In the absence of ATP, only oligopeptides shorter than five residues are hydrolyzed (such as succinyl-Leu-Tyr-|-NHMec, and Leu-Tyr-Leu-|-Tyr-Trp, in which cleavage of the -Tyr-|-Leu- and -Tyr-|-Trp bonds also occurs).. Cleaves peptides in various proteins in a process that requires ATP hydrolysis. Has a chymotrypsin-like activity. Plays a major role in the degradation of misfolded proteins. The protein is ATP-dependent Clp protease proteolytic subunit of Chlorokybus atmophyticus (Soil alga).